We begin with the raw amino-acid sequence, 887 residues long: Lateral signaling target protein 2 homolog (887 aa).

K87 participates in a covalent cross-link: Glycyl lysine isopeptide (Lys-Gly) (interchain with G-Cter in ubiquitin). The interval 308 to 327 (PALSAPLPPEGPLSAKAKDP) is disordered. S334 bears the Phosphoserine mark. Disordered regions lie at residues 354–396 (DEMS…GSDE) and 412–474 (ALAR…ASLA). Position 516 is a phosphothreonine (T516). At S586 the chain carries Phosphoserine; by MAP2K. Residues 599–714 (LAKASDRAPE…THAAPQATRE (116 aa)) are disordered. Residues 602 to 612 (ASDRAPERQEE) are compositionally biased toward basic and acidic residues. The segment covering 638–648 (TSGSQVDTASG) has biased composition (polar residues). Low complexity-rich tracts occupy residues 681-693 (SGSS…SCSS) and 700-711 (AAPAATHAAPQA). The segment at 817–879 (DEACGFCTAC…THCYMFHVTP (63 aa)) adopts an FYVE-type zinc-finger fold. C823, C826, C839, C842, C847, C850, and C869 together coordinate Zn(2+). Residue T870 is modified to Phosphothreonine; by MAP2K. C872 is a binding site for Zn(2+).

Belongs to the lst-2 family. Interacts with TRIM3. Post-translationally, monoubiquitination at Lys-87 prevents binding to phosphatidylinositol 3-phosphate (PI3P) and localization to early endosome membranes.

The protein resides in the cytoplasm. The protein localises to the cytosol. It is found in the early endosome membrane. Functionally, negative regulator of epidermal growth factor receptor (EGFR) signaling. Acts by promoting EGFR degradation in endosomes when not monoubiquitinated. The protein is Lateral signaling target protein 2 homolog (ZFYVE28) of Homo sapiens (Human).